Consider the following 811-residue polypeptide: RFX-like DNA-binding protein RFX1 (811 aa).

2 disordered regions span residues 48–92 (EPTS…TYLP) and 111–156 (LLHQ…QRQP). Low complexity predominate over residues 51–70 (SRGSNDNSNGPSNGSSVNSN). Over residues 140–149 (SPTPTQPPAQ) the composition is skewed to pro residues. Ser173 carries the post-translational modification Phosphoserine. Positions 181 to 222 (KSEETLNNNPPTAAKRTNTFPSIPSSTKKQKTSQEKRISSIS) are disordered. Residues 185-204 (TLNNNPPTAAKRTNTFPSIP) show a composition bias toward polar residues. The segment at residues 285-360 (ALLWLMKNCK…YHYCGLKLTV (76 aa)) is a DNA-binding region (RFX-type winged-helix). Residues 377–391 (LVHNNDPISPLSSPS) are compositionally biased toward low complexity. The interval 377–461 (LVHNNDPISP…AANNPTGTLS (85 aa)) is disordered. Over residues 409 to 428 (NRKSLSRTGSPVKQSSNDNP) the composition is skewed to polar residues. Positions 434–445 (ESQHPNETEANK) are enriched in basic and acidic residues.

It belongs to the RFX family.

This chain is RFX-like DNA-binding protein RFX1 (RFX1), found in Saccharomyces cerevisiae (strain ATCC 204508 / S288c) (Baker's yeast).